The chain runs to 819 residues: Leucine--tRNA ligase (819 aa).

The 'HIGH' region motif lies at 41-51; sequence PYPSGTLHVGH. A 'KMSKS' region motif is present at residues 578 to 582; the sequence is KMSKS. Position 581 (lysine 581) interacts with ATP.

The protein belongs to the class-I aminoacyl-tRNA synthetase family.

Its subcellular location is the cytoplasm. The catalysed reaction is tRNA(Leu) + L-leucine + ATP = L-leucyl-tRNA(Leu) + AMP + diphosphate. The polypeptide is Leucine--tRNA ligase (Fervidobacterium nodosum (strain ATCC 35602 / DSM 5306 / Rt17-B1)).